Consider the following 293-residue polypeptide: Acetylglutamate kinase (293 aa).

Substrate-binding positions include 68-69, arginine 90, and asparagine 189; that span reads GG.

It belongs to the acetylglutamate kinase family. ArgB subfamily.

It localises to the cytoplasm. It catalyses the reaction N-acetyl-L-glutamate + ATP = N-acetyl-L-glutamyl 5-phosphate + ADP. Its pathway is amino-acid biosynthesis; L-arginine biosynthesis; N(2)-acetyl-L-ornithine from L-glutamate: step 2/4. Its function is as follows. Catalyzes the ATP-dependent phosphorylation of N-acetyl-L-glutamate. The protein is Acetylglutamate kinase of Mycobacterium marinum (strain ATCC BAA-535 / M).